The sequence spans 307 residues: Ribonuclease Z (307 aa).

Zn(2+) contacts are provided by H63, H65, D67, H68, H141, D208, and H266. D67 functions as the Proton acceptor in the catalytic mechanism.

Belongs to the RNase Z family. Homodimer. The cofactor is Zn(2+).

The catalysed reaction is Endonucleolytic cleavage of RNA, removing extra 3' nucleotides from tRNA precursor, generating 3' termini of tRNAs. A 3'-hydroxy group is left at the tRNA terminus and a 5'-phosphoryl group is left at the trailer molecule.. Functionally, zinc phosphodiesterase, which displays some tRNA 3'-processing endonuclease activity. Probably involved in tRNA maturation, by removing a 3'-trailer from precursor tRNA. In Chlamydia pneumoniae (Chlamydophila pneumoniae), this protein is Ribonuclease Z.